The primary structure comprises 1381 residues: Serine-aspartate repeat-containing protein D (1381 aa).

Residues 1–35 (MLNRENKTAITRKGMVSNRLNKFSIRKYTVGTASI) form the signal peptide. The YSIRK-G/S signaling motif signature appears at 23–34 (FSIRKYTVGTAS). Residues 36-568 (LVGTTLIFGL…NNQSGGAGQE (533 aa)) are ligand binding A region. Positions 54–185 (ESTNKELNEA…NKKVDAKTES (132 aa)) are disordered. 2 stretches are compositionally biased toward polar residues: residues 62-71 (EATTSASDNQ) and 94-108 (EMVS…SNGN). The span at 130–145 (KSDEQASPKSTNEDLN) shows a compositional bias: basic and acidic residues. Composition is skewed to polar residues over residues 146 to 155 (TKQTISNQEA) and 163 to 173 (NKSVVNVQPTN). Over residues 174–183 (EENKKVDAKT) the composition is skewed to basic and acidic residues. CNA-B domains are found at residues 569 to 680 (VYKI…IYKP), 681 to 791 (KYNL…YKTP), 792 to 901 (KYNL…FYKP), 902 to 1012 (TYNL…YKTP), and 1013 to 1123 (KYSL…EEET). 3 disordered regions span residues 857–883 (ETPS…TSTT), 972–992 (YTPT…GLTT), and 1078–1357 (EKPA…SNNA). Polar residues-rich tracts occupy residues 860 to 869 (SGYTPTQVGS) and 972 to 981 (YTPTSVTSGN). Acidic residues-rich tracts occupy residues 1091-1101 (TEDDKDADGGE), 1118-1134 (YYEE…DSDS), 1142-1164 (SDSD…DSDS), and 1172-1320 (SDSD…DSDS). Positions 1344–1348 (LPETG) match the LPXTG sorting signal motif. Position 1347 is a pentaglycyl murein peptidoglycan amidated threonine (Thr-1347). A propeptide spans 1348 to 1381 (GNENSGSNNATLFGGLFAALGSLLLFGRRKKQNK) (removed by sortase).

The protein belongs to the serine-aspartate repeat-containing protein (SDr) family. In terms of assembly, interacts with host DSG1; this interaction increases S.aureus adherence to keratinocytes.

It is found in the secreted. It localises to the cell wall. Cell surface-associated calcium-binding protein which plays an important role in adhesion and pathogenesis. Mediates interactions with components of the extracellular matrix such as host DSG1 to promote bacterial adhesion to host cells. Contributes to the resistance to killing by innate immune components such as neutrophils present in blood and thus attenuates bacterial clearance. This chain is Serine-aspartate repeat-containing protein D (sdrD), found in Staphylococcus aureus (strain USA300).